The following is a 340-amino-acid chain: Nuclear hormone receptor family member nhr-268 (340 aa).

A DNA-binding region (nuclear receptor) is located at residues 1-75; the sequence is MNCLVCSARA…IGMKAASKND (75 aa). NR C4-type zinc fingers lie at residues 3-23 and 39-58; these read CLVC…CFAC and CKYF…CRAC. The NR LBD domain maps to 98 to 337; the sequence is KNDKNYSNFI…KRLMQDIFSH (240 aa).

Belongs to the nuclear hormone receptor family.

It is found in the nucleus. Its function is as follows. Orphan nuclear receptor. The chain is Nuclear hormone receptor family member nhr-268 (nhr-268) from Caenorhabditis elegans.